The primary structure comprises 277 residues: Putative phosphoenolpyruvate synthase regulatory protein (277 aa).

ADP is bound at residue 157 to 164; that stretch reads GVSRCGKT.

Belongs to the pyruvate, phosphate/water dikinase regulatory protein family. PSRP subfamily.

It catalyses the reaction [pyruvate, water dikinase] + ADP = [pyruvate, water dikinase]-phosphate + AMP + H(+). The catalysed reaction is [pyruvate, water dikinase]-phosphate + phosphate + H(+) = [pyruvate, water dikinase] + diphosphate. Bifunctional serine/threonine kinase and phosphorylase involved in the regulation of the phosphoenolpyruvate synthase (PEPS) by catalyzing its phosphorylation/dephosphorylation. This chain is Putative phosphoenolpyruvate synthase regulatory protein, found in Klebsiella pneumoniae subsp. pneumoniae (strain ATCC 700721 / MGH 78578).